Here is a 57-residue protein sequence, read N- to C-terminus: U17-myrmicitoxin-Tb1a (57 aa).

A signal peptide spans 1–29; it reads MEKNRTNIFSVYLMITFLLISIFITMVMS. The propeptide occupies 30–33; it reads DGEA. Cysteine 42 and cysteine 53 form a disulfide bridge. Position 56 is an alanine amide (alanine 56).

Post-translationally, O-glycosylated. In terms of tissue distribution, expressed by the venom gland.

The protein resides in the secreted. Serine protease inhibitor which exhibits antifibrinolytic, antielastolytic and antimicrobial activities. Displays antimicrobial activity against bacteria and fungi. Likely functions in the innate immune response to microbial infection and possibly in the venom, as an antifibrinolytic agent. The protein is U17-myrmicitoxin-Tb1a of Tetramorium bicarinatum (Tramp ant).